We begin with the raw amino-acid sequence, 666 residues long: DNA mismatch repair protein MutL (666 aa).

The protein belongs to the DNA mismatch repair MutL/HexB family.

In terms of biological role, this protein is involved in the repair of mismatches in DNA. It is required for dam-dependent methyl-directed DNA mismatch repair. May act as a 'molecular matchmaker', a protein that promotes the formation of a stable complex between two or more DNA-binding proteins in an ATP-dependent manner without itself being part of a final effector complex. The chain is DNA mismatch repair protein MutL from Clostridium botulinum (strain Loch Maree / Type A3).